Reading from the N-terminus, the 133-residue chain is Cytidine deaminase (133 aa).

The region spanning 4–126 (VDWNMLRGNA…DLLPDAFGLD (123 aa)) is the CMP/dCMP-type deaminase domain. 45–47 (NVE) is a substrate binding site. Cysteine 56 contacts Zn(2+). Glutamate 58 (proton donor) is an active-site residue. Cysteine 89 and cysteine 92 together coordinate Zn(2+).

Belongs to the cytidine and deoxycytidylate deaminase family. Homotetramer. Zn(2+) serves as cofactor.

It catalyses the reaction cytidine + H2O + H(+) = uridine + NH4(+). The catalysed reaction is 2'-deoxycytidine + H2O + H(+) = 2'-deoxyuridine + NH4(+). Recycles cytidine and 2-deoxycytidine for uridine and 2-deoxyuridine synthesis, respectively. Catalyzes the hydrolytic deamination of cytidine and 2-deoxycytidine to form, respectively, uridine and 2-deoxyuridine. This Mycobacterium tuberculosis (strain CDC 1551 / Oshkosh) protein is Cytidine deaminase (cdd).